Reading from the N-terminus, the 317-residue chain is Carbonic anhydrase 6 (317 aa).

A signal peptide spans methionine 1 to alanine 17. The 259-residue stretch at serine 19–phenylalanine 277 folds into the Alpha-carbonic anhydrase domain. Residues cysteine 41 and cysteine 223 are joined by a disulfide bond. Catalysis depends on histidine 84, which acts as the Proton donor/acceptor. Residues histidine 110, histidine 112, and histidine 137 each coordinate Zn(2+). Position 219–220 (threonine 219–threonine 220) interacts with substrate. N-linked (GlcNAc...) asparagine glycosylation is present at asparagine 255.

It belongs to the alpha-carbonic anhydrase family. The cofactor is Zn(2+). In terms of tissue distribution, major constituent of saliva.

The protein resides in the secreted. It carries out the reaction hydrogencarbonate + H(+) = CO2 + H2O. Reversible hydration of carbon dioxide. Its role in saliva is unknown. This Mus musculus (Mouse) protein is Carbonic anhydrase 6 (Ca6).